A 450-amino-acid chain; its full sequence is Na(+)/H(+) antiporter NhaA 1 (450 aa).

11 helical membrane passes run 35–55 (SSLF…SDYA), 79–99 (LKHI…GLEI), 117–137 (LIIC…GFNW), 143–163 (IGWG…LTMV), 173–193 (AFIV…IAIF), 198–218 (ISLM…VANY), 224–244 (PLFY…SGVH), 320–340 (LPVV…VVIN), 356–376 (IISG…WFAL), 392–412 (VIGA…IATL), and 423–443 (VAKT…LLYL).

It belongs to the NhaA Na(+)/H(+) (TC 2.A.33) antiporter family.

It is found in the cell inner membrane. The enzyme catalyses Na(+)(in) + 2 H(+)(out) = Na(+)(out) + 2 H(+)(in). Functionally, na(+)/H(+) antiporter that extrudes sodium in exchange for external protons. The protein is Na(+)/H(+) antiporter NhaA 1 of Shewanella denitrificans (strain OS217 / ATCC BAA-1090 / DSM 15013).